The sequence spans 161 residues: Probable metalloprotease HVO_1016 (161 aa).

Positions valine 10–valine 131 constitute an MPN domain. The active-site Proton donor/acceptor is glutamate 31. Zn(2+) is bound by residues histidine 87, histidine 89, and aspartate 100. The short motif at histidine 87 to aspartate 100 is the JAMM motif element.

This sequence belongs to the peptidase M67B family. As to quaternary structure, monomer and homodimer. It depends on Zn(2+) as a cofactor.

Its function is as follows. Probable metalloprotease. Does not hydrolyze SAMP1- and SAMP2-protein conjugates, diglycine-AMC, Ub-AMC, hemoglobin, cytochrome c, carbonic anhydrase, creatinine phosphokinase, beta-amylase and bovine serum albumin. This is Probable metalloprotease HVO_1016 from Haloferax volcanii (strain ATCC 29605 / DSM 3757 / JCM 8879 / NBRC 14742 / NCIMB 2012 / VKM B-1768 / DS2) (Halobacterium volcanii).